The following is a 563-amino-acid chain: uncharacterized protein (563 aa).

The segment at 30–303 (QSIEIQPEEK…EKSPEKQVEI (274 aa)) is disordered. Residues 36–56 (PEEKPSEEKQPEEKSSEEKPK) show a composition bias toward basic and acidic residues. A compositionally biased stretch (polar residues) spans 61–72 (SAINSEKTQKPI). 3 stretches are compositionally biased toward basic and acidic residues: residues 101–115 (TTER…DDKQ), 123–276 (ERGR…EPRP), and 282–303 (EKSP…QVEI).

Belongs to the mimivirus L41 family.

This is an uncharacterized protein from Acanthamoeba polyphaga (Amoeba).